Here is an 816-residue protein sequence, read N- to C-terminus: MVTRLRLVSRSSRYATVKFTDSVSACSCRRLFSASTDPEPESQPEQAPPTNPVTGDEKLRNLRVLLQQNRIETARGVLSSLLRSDSTPFASPKELFSAFSLSSPSLKHDFSYLLLSVLLNESKMISEAADLFFALRNEGIYPSSDSLTLLLDHLVKTKQFRVTINVFLNILESDFRPSKFMYGKAIQAAVKLSDVGKGLELFNRMKHDRIYPSVFIYNVLIDGLCKGKRMNDAEQLFDEMLARRLLPSLITYNTLIDGYCKAGNPEKSFKVRERMKADHIEPSLITFNTLLKGLFKAGMVEDAENVLKEMKDLGFVPDAFTFSILFDGYSSNEKAEAALGVYETAVDSGVKMNAYTCSILLNALCKEGKIEKAEEILGREMAKGLVPNEVIYNTMIDGYCRKGDLVGARMKIEAMEKQGMKPDHLAYNCLIRRFCELGEMENAEKEVNKMKLKGVSPSVETYNILIGGYGRKYEFDKCFDILKEMEDNGTMPNVVSYGTLINCLCKGSKLLEAQIVKRDMEDRGVSPKVRIYNMLIDGCCSKGKIEDAFRFSKEMLKKGIELNLVTYNTLIDGLSMTGKLSEAEDLLLEISRKGLKPDVFTYNSLISGYGFAGNVQRCIALYEEMKRSGIKPTLKTYHLLISLCTKEGIELTERLFGEMSLKPDLLVYNGVLHCYAVHGDMEKAFNLQKQMIEKSIGLDKTTYNSLILGQLKVGKLCEVRSLIDEMNAREMEPEADTYNIIVKGHCEVKDYMSAYVWYREMQEKGFLLDVCIGNELVSGLKEEWRSKEAEIVISEMNGRMLGDVTVDEDLSATEKL.

The N-terminal 39 residues, Met1–Glu39, are a transit peptide targeting the mitochondrion. Positions Ala34–Glu57 are disordered. 20 PPR repeats span residues His108 to Pro142, Ser143 to Pro177, Ser178 to Pro212, Ser213 to Pro247, Ser248 to Pro282, Ser283 to Pro317, Asp318 to Met352, Asn353 to Pro387, Asn388 to Pro422, Asp423 to Pro457, Ser458 to Pro492, Asn493 to Pro527, Lys528 to Leu562, Asn563 to Pro597, Asp598 to Pro632, Thr633 to Lys662, Asp664 to Leu698, Asp699 to Pro733, Glu734 to Leu768, and Asp769 to Asp803.

Belongs to the PPR family. P subfamily.

It localises to the mitochondrion. In Arabidopsis thaliana (Mouse-ear cress), this protein is Pentatricopeptide repeat-containing protein At5g12100, mitochondrial.